The primary structure comprises 871 residues: DNA mismatch repair protein MutS (871 aa).

620–627 serves as a coordination point for ATP; sequence GPNMGGKS. The segment at 806 to 837 is disordered; the sequence is HHGGLNEPKQATMELTPPPEAIPSHTEKRNPL.

Belongs to the DNA mismatch repair MutS family.

In terms of biological role, this protein is involved in the repair of mismatches in DNA. It is possible that it carries out the mismatch recognition step. This protein has a weak ATPase activity. The protein is DNA mismatch repair protein MutS of Idiomarina loihiensis (strain ATCC BAA-735 / DSM 15497 / L2-TR).